A 221-amino-acid polypeptide reads, in one-letter code: Deoxyribose-phosphate aldolase (221 aa).

Aspartate 90 serves as the catalytic Proton donor/acceptor. The Schiff-base intermediate with acetaldehyde role is filled by lysine 152. Residue lysine 181 is the Proton donor/acceptor of the active site.

Belongs to the DeoC/FbaB aldolase family. DeoC type 1 subfamily.

The protein resides in the cytoplasm. It carries out the reaction 2-deoxy-D-ribose 5-phosphate = D-glyceraldehyde 3-phosphate + acetaldehyde. The protein operates within carbohydrate degradation; 2-deoxy-D-ribose 1-phosphate degradation; D-glyceraldehyde 3-phosphate and acetaldehyde from 2-deoxy-alpha-D-ribose 1-phosphate: step 2/2. Catalyzes a reversible aldol reaction between acetaldehyde and D-glyceraldehyde 3-phosphate to generate 2-deoxy-D-ribose 5-phosphate. The protein is Deoxyribose-phosphate aldolase of Exiguobacterium sp. (strain ATCC BAA-1283 / AT1b).